A 753-amino-acid polypeptide reads, in one-letter code: 5-methyltetrahydropteroyltriglutamate--homocysteine methyltransferase (753 aa).

Residues 17–20 (RELK) and lysine 117 each bind 5-methyltetrahydropteroyltri-L-glutamate. Residues 431 to 433 (IGS) and glutamate 484 each bind L-homocysteine. L-methionine contacts are provided by residues 431–433 (IGS) and glutamate 484. 5-methyltetrahydropteroyltri-L-glutamate is bound by residues 515 to 516 (RC) and tryptophan 561. Residue aspartate 599 participates in L-homocysteine binding. Aspartate 599 lines the L-methionine pocket. Glutamate 605 serves as a coordination point for 5-methyltetrahydropteroyltri-L-glutamate. Zn(2+) contacts are provided by histidine 641, cysteine 643, and glutamate 665. Residue histidine 694 is the Proton donor of the active site. Residue cysteine 726 coordinates Zn(2+).

Belongs to the vitamin-B12 independent methionine synthase family. It depends on Zn(2+) as a cofactor.

It catalyses the reaction 5-methyltetrahydropteroyltri-L-glutamate + L-homocysteine = tetrahydropteroyltri-L-glutamate + L-methionine. It functions in the pathway amino-acid biosynthesis; L-methionine biosynthesis via de novo pathway; L-methionine from L-homocysteine (MetE route): step 1/1. Functionally, catalyzes the transfer of a methyl group from 5-methyltetrahydrofolate to homocysteine resulting in methionine formation. This Escherichia coli O9:H4 (strain HS) protein is 5-methyltetrahydropteroyltriglutamate--homocysteine methyltransferase.